The sequence spans 287 residues: uncharacterized protein (287 aa).

The region spanning 115-287 is the ATP-grasp domain; that stretch reads SLLSKETIKS…KKFLKKKLIS (173 aa).

This is an uncharacterized protein from Mycoplasma genitalium (strain ATCC 33530 / DSM 19775 / NCTC 10195 / G37) (Mycoplasmoides genitalium).